Consider the following 106-residue polypeptide: UPF0145 protein CKL_2433 (106 aa).

It belongs to the UPF0145 family.

This chain is UPF0145 protein CKL_2433, found in Clostridium kluyveri (strain ATCC 8527 / DSM 555 / NBRC 12016 / NCIMB 10680 / K1).